We begin with the raw amino-acid sequence, 893 residues long: Dystroglycan 1 (893 aa).

The N-terminal stretch at 1-27 (MSVDNWLLHPLWGQTFLLLLSVAVAQA) is a signal peptide. The tract at residues 28–406 (HWPSEPSEAV…GQIRPTLTIP (379 aa)) is required for laminin recognition. Residues 47–69 (SMHSVLSDFQEAVPTVVGIPDGT) are O-glycosylated at one site. An N-linked (GlcNAc...) asparagine glycan is attached at asparagine 139. A disulfide bridge links cysteine 180 with cysteine 262. The tract at residues 314-483 (ATPTPVTAIG…PPTRIRTTTS (170 aa)) is mucin-like domain. Residues threonine 315, threonine 317, and threonine 377 are each glycosylated (O-linked (Man6P...) threonine). Residues 379–498 (TLGPIQPTRV…GEPNQRPELK (120 aa)) are disordered. Over residues 409 to 445 (VEPTAVITPPTTTTKKPRVSTPKPATPSTDSSTTTTR) the composition is skewed to low complexity. The segment at 461-483 (TTKAPITRLETASPPTRIRTTTS) is O-glycosylated at seven sites with GalNAc. Residues 601–710 (KAPARFKARL…LSIAVTGSGS (110 aa)) form the Peptidase S72 domain. N-linked (GlcNAc...) asparagine glycosylation is found at asparagine 639, asparagine 647, and asparagine 659. The Extracellular portion of the chain corresponds to 652–751 (SIVVEWTNNT…SSEDDVYLHT (100 aa)). Residues cysteine 667 and cysteine 711 are joined by a disulfide bond. Positions 722-744 (PSPGSSAAPATEVPDRDPEKSSE) are disordered. Positions 734–744 (VPDRDPEKSSE) are enriched in basic and acidic residues. A helical transmembrane segment spans residues 752-772 (VIPAVVVAAILLIAGIIAMIC). The Cytoplasmic portion of the chain corresponds to 773–893 (YRKKRKGKLT…YRSPPPYVPP (121 aa)). The Nuclear localization signal motif lies at 774–780 (RKKRKGK). Residue threonine 788 is modified to Phosphothreonine. The required for interaction with CAV3 stretch occupies residues 817–893 (LQEEKAPLPP…YRSPPPYVPP (77 aa)). The tract at residues 821-893 (KAPLPPPEYP…YRSPPPYVPP (73 aa)) is disordered. Positions 830–844 (PNQSMPETTPLNQDT) are enriched in polar residues. The segment covering 857 to 868 (NAPPYQPPPPFT) has biased composition (pro residues). The required for binding DMD and UTRN stretch occupies residues 878–893 (PKNMTPYRSPPPYVPP). The PPXY motif motif lies at 887–890 (PPPY). Tyrosine 890 is modified (phosphotyrosine; by SRC).

As to quaternary structure, monomer. Heterodimer of alpha- and beta-dystroglycan subunits which are the central components of the dystrophin-glycoprotein complex. This complex then can form a dystrophin-associated glycoprotein complex (DGC) which is composed of three subcomplexes: a cytoplasmic complex comprised of DMD (or UTRN), DTNA and a number of syntrophins, such as SNTB1, SNTB2, SNTG1 and SNTG2, the transmembrane dystroglycan complex, and the sarcoglycan-sarcospan complex. Interacts (via the N-terminal of alphaDAG1) with LARGE1; the interaction enhances laminin binding. Interacts with SGCD. Interacts with AGR2 and AGR3. Interacts (betaDAG1) with DMD; the interaction is inhibited by phosphorylation on the PPXY motif. Interacts (betaDAG1, via its PPXY motif) with UTRN (via its WWW and ZZ domains); the interaction is inhibited by phosphorylation on the PPXY motif. Interacts (betaDAG1, via its phosphorylated PPXY motif) with the SH2 domain-containing proteins, FYN, CSK, NCK and SHC. Interacts (betaDAG1) with CAV3 (via a central WW-like domain); the interaction disrupts the binding of DMD. BetaDAG1 directly interacts with ANK3, but not with ANK2; this interaction does not interfere with DMD-binding and is required for retention at costameres. Identified in a dystroglycan complex that contains at least PRX, DRP2, UTRN, DMD and DAG1. Interacts with POMGNT1. BetaDAG1 interacts with CD93. Post-translationally, O-glycosylated. POMGNT1 catalyzes the initial addition of N-acetylglucosamine, giving rise to the GlcNAc(beta1-2)Man(alpha1-)O-Ser/Thr moiety and thus providing the necessary basis for the addition of further carbohydrate moieties. Heavily O-glycosylated comprising of up to two thirds of its mass and the carbohydrate composition differs depending on tissue type. Mucin-type O-glycosylation is important for ligand binding activity. O-mannosylation is found in high abundance in both brain and muscle where the most abundant glycan is Sia-alpha-2-3-Gal-beta-1-4-Glc-NAc-beta-1-2-Man. In muscle, glycosylation on Thr-315, Thr-317, Thr-379 by a phosphorylated O-mannosyl glycan with the structure 2-(N-acetylamido)-2-deoxygalactosyl-beta-1,3-2-(N-acetylamido)-2-deoxyglucosyl-beta-1,4-6-phosphomannose is mediated by like-acetylglucosaminyltransferase (LARGE1) protein amd is required for laminin binding. O-glycosylated in the N-terminal region with a core 1 or possibly core 8 glycan. The brain form displays a unique glycosylation pattern which is absent in other tissues; this form shows enhanced binding to laminin LAMA5 compared to the skeletal muscle form. N-glycosylated. In terms of processing, autolytic cleavage produces the alpha and beta subunits. In cutaneous cells, as well as in certain pathological conditions, shedding of beta-dystroglycan can occur releasing a peptide of about 30 kDa. Post-translationally, SRC-mediated phosphorylation of the PPXY motif of the beta subunit recruits SH2 domain-containing proteins, but inhibits binding to WWW domain-containing proteins, DMD and UTRN. This phosphorylation also inhibits nuclear entry. In terms of tissue distribution, detected in brain and kidney (at protein level). Detected in sciatic nerve (at protein level). Expressed in neurons and muscle cells (at protein level). Expressed in a variety of tissues. In brain, expressed in the hippocampal formation, the olfactory bulb, the cerebellum and the thalamus. In the peripheral nerve system, expressed in Schwann cells.

Its subcellular location is the secreted. It localises to the extracellular space. It is found in the cell membrane. The protein resides in the cytoplasm. The protein localises to the cytoskeleton. Its subcellular location is the nucleus. It localises to the nucleoplasm. It is found in the sarcolemma. The protein resides in the postsynaptic cell membrane. Its function is as follows. The dystroglycan complex is involved in a number of processes including laminin and basement membrane assembly, sarcolemmal stability, cell survival, peripheral nerve myelination, nodal structure, cell migration, and epithelial polarization. Extracellular peripheral glycoprotein that acts as a receptor for extracellular matrix proteins containing laminin-G domains, and for certain adenoviruses. Receptor for laminin-2 (LAMA2) and agrin in peripheral nerve Schwann cells. Also acts as a receptor for laminin LAMA5. Functionally, transmembrane protein that plays important roles in connecting the extracellular matrix to the cytoskeleton. Acts as a cell adhesion receptor in both muscle and non-muscle tissues. Receptor for both DMD and UTRN and, through these interactions, scaffolds axin to the cytoskeleton. Also functions in cell adhesion-mediated signaling and implicated in cell polarity. This is Dystroglycan 1 from Mus musculus (Mouse).